A 284-amino-acid chain; its full sequence is ATP phosphoribosyltransferase (284 aa).

The protein belongs to the ATP phosphoribosyltransferase family. Long subfamily. Mg(2+) is required as a cofactor.

It is found in the cytoplasm. The enzyme catalyses 1-(5-phospho-beta-D-ribosyl)-ATP + diphosphate = 5-phospho-alpha-D-ribose 1-diphosphate + ATP. It participates in amino-acid biosynthesis; L-histidine biosynthesis; L-histidine from 5-phospho-alpha-D-ribose 1-diphosphate: step 1/9. Feedback inhibited by histidine. Catalyzes the condensation of ATP and 5-phosphoribose 1-diphosphate to form N'-(5'-phosphoribosyl)-ATP (PR-ATP). Has a crucial role in the pathway because the rate of histidine biosynthesis seems to be controlled primarily by regulation of HisG enzymatic activity. The sequence is that of ATP phosphoribosyltransferase from Pseudarthrobacter chlorophenolicus (strain ATCC 700700 / DSM 12829 / CIP 107037 / JCM 12360 / KCTC 9906 / NCIMB 13794 / A6) (Arthrobacter chlorophenolicus).